The primary structure comprises 146 residues: Probable transporter XF_0765 (146 aa).

4 consecutive transmembrane segments (helical) span residues 9–29 (FTVALAAGLLFGFGLALSEMI), 46–66 (NPSLLFVLGSALAVAFPGMAL), 91–111 (IVFGSAIFGTGWGLTGLCPGP), and 116–136 (LSTGLGPVLLFVAAMAAGMII).

Belongs to the TsuA/YedE (TC 9.B.102) family.

The protein localises to the cell inner membrane. The chain is Probable transporter XF_0765 from Xylella fastidiosa (strain 9a5c).